A 477-amino-acid polypeptide reads, in one-letter code: Phosphomethylpyrimidine synthase (477 aa).

Substrate is bound by residues Asn67, Met96, Tyr125, His160, 180-182 (SRG), 221-224 (DGLR), and Glu260. His264 contacts Zn(2+). Residue Tyr287 coordinates substrate. A Zn(2+)-binding site is contributed by His328. [4Fe-4S] cluster contacts are provided by Cys408, Cys411, and Cys416. The segment covering 427-440 (AGDGMDGLESRTDL) has biased composition (basic and acidic residues). A disordered region spans residues 427–477 (AGDGMDGLESRTDLDSSAAAAVNRPPTGVHRAEKLDDIPCPVAEDDVAADD).

This sequence belongs to the ThiC family. [4Fe-4S] cluster is required as a cofactor.

It carries out the reaction 5-amino-1-(5-phospho-beta-D-ribosyl)imidazole + S-adenosyl-L-methionine = 4-amino-2-methyl-5-(phosphooxymethyl)pyrimidine + CO + 5'-deoxyadenosine + formate + L-methionine + 3 H(+). Its pathway is cofactor biosynthesis; thiamine diphosphate biosynthesis. In terms of biological role, catalyzes the synthesis of the hydroxymethylpyrimidine phosphate (HMP-P) moiety of thiamine from aminoimidazole ribotide (AIR) in a radical S-adenosyl-L-methionine (SAM)-dependent reaction. In Natronomonas pharaonis (strain ATCC 35678 / DSM 2160 / CIP 103997 / JCM 8858 / NBRC 14720 / NCIMB 2260 / Gabara) (Halobacterium pharaonis), this protein is Phosphomethylpyrimidine synthase.